Reading from the N-terminus, the 487-residue chain is Kynureninase 1 (487 aa).

Residues L149, T150, 177-180, S234, D263, H266, and Y288 contribute to the pyridoxal 5'-phosphate site; that span reads FPSD. An N6-(pyridoxal phosphate)lysine modification is found at K289. Residues W329 and N357 each coordinate pyridoxal 5'-phosphate.

The protein belongs to the kynureninase family. As to quaternary structure, homodimer. Pyridoxal 5'-phosphate is required as a cofactor.

The protein localises to the cytoplasm. The enzyme catalyses L-kynurenine + H2O = anthranilate + L-alanine + H(+). The catalysed reaction is 3-hydroxy-L-kynurenine + H2O = 3-hydroxyanthranilate + L-alanine + H(+). The protein operates within amino-acid degradation; L-kynurenine degradation; L-alanine and anthranilate from L-kynurenine: step 1/1. Its pathway is cofactor biosynthesis; NAD(+) biosynthesis; quinolinate from L-kynurenine: step 2/3. In terms of biological role, catalyzes the cleavage of L-kynurenine (L-Kyn) and L-3-hydroxykynurenine (L-3OHKyn) into anthranilic acid (AA) and 3-hydroxyanthranilic acid (3-OHAA), respectively. The sequence is that of Kynureninase 1 (bna5-1) from Emericella nidulans (strain FGSC A4 / ATCC 38163 / CBS 112.46 / NRRL 194 / M139) (Aspergillus nidulans).